The chain runs to 132 residues: Profilin-1 (132 aa).

The protein belongs to the profilin family. In terms of assembly, occurs in many kinds of cells as a complex with monomeric actin in a 1:1 ratio.

Its subcellular location is the cytoplasm. It localises to the cytoskeleton. In terms of biological role, binds to actin and affects the structure of the cytoskeleton. At high concentrations, profilin prevents the polymerization of actin, whereas it enhances it at low concentrations. By binding to PIP2, it inhibits the formation of IP3 and DG. This is Profilin-1 (PRO1) from Parietaria judaica (Pellitory-of-the-wall).